The sequence spans 453 residues: Frizzled/smoothened-like sans CRD protein G (453 aa).

A signal peptide spans 1–24 (MIYILKNFIIILFFLLIILKRIES). The Extracellular segment spans residues 25 to 89 (QSLPSLPSPT…PFFTLDEWNK (65 aa)). 2 N-linked (GlcNAc...) asparagine glycosylation sites follow: N49 and N67. Residues 90–110 (FLYMSLVMGTISFLCGLFLLI) form a helical membrane-spanning segment. The Cytoplasmic segment spans residues 111-124 (TYSPIVNKTHNRHT). Residues 125-145 (IGVMCMSFGVCLAMCSDMWNF) traverse the membrane as a helical segment. The Extracellular portion of the chain corresponds to 146–170 (GSNFTDQKSICPSPGQYLTTSNSRC). An N-linked (GlcNAc...) asparagine glycan is attached at N148. A helical membrane pass occupies residues 171–191 (LGSGIVLQFGGVFGFLNWTLL). Topologically, residues 192-209 (SFDLFMNIKGIITKNYDK) are cytoplasmic. The chain crosses the membrane as a helical span at residues 210 to 230 (YYFVATFIIAIIFTFVPIVND). The Extracellular segment spans residues 231-250 (QYSMSYIGLGCWLGSAVYQL). The chain crosses the membrane as a helical span at residues 251-271 (IFFWILLSICLIVSSVFIILI). The Cytoplasmic portion of the chain corresponds to 272-296 (LKEIYIIIKQSKQKTSLKGNIRPLL). The helical transmembrane segment at 297–317 (CITVTSFAFFYMFFYYISIVI) threads the bilayer. Residues 318–352 (EGDYYERILNEYTDCLMDPTKDVSECKFPRMSVAN) are Extracellular-facing. A helical membrane pass occupies residues 353–373 (EFVFLLCLRLLGIGAFIFYGI). Residues 374–453 (NKEVKKIWLN…DDNFKPIIIK (80 aa)) are Cytoplasmic-facing.

This sequence belongs to the G-protein coupled receptor Fz/Smo family.

Its subcellular location is the membrane. This is Frizzled/smoothened-like sans CRD protein G (fscG) from Dictyostelium discoideum (Social amoeba).